The primary structure comprises 454 residues: Probable xylan O-acetyltransferase 9 (454 aa).

Residues Met-1–Arg-15 lie on the Cytoplasmic side of the membrane. A helical; Signal-anchor for type II membrane protein transmembrane segment spans residues Val-16 to Glu-36. Residues Asp-37 to Pro-454 are Lumenal-facing. Cystine bridges form between Cys-101–Cys-152, Cys-123–Cys-188, Cys-132–Cys-435, and Cys-352–Cys-431. The GDS motif motif lies at Gly-175–Ser-177. The active-site Nucleophile is Ser-177. N-linked (GlcNAc...) asparagine glycosylation is found at Asn-219, Asn-293, and Asn-394. Asp-430 acts as the Proton donor in catalysis. Residues Asp-430–His-433 carry the DXXH motif motif. Residue His-433 is the Proton acceptor of the active site.

This sequence belongs to the PC-esterase family. TBL subfamily.

Its subcellular location is the golgi apparatus membrane. Its function is as follows. Probable xylan acetyltransferase required for 2-O- and 3-O-monoacetylation of xylosyl residues in xylan. Possesses extremely low activity in vitro. This chain is Probable xylan O-acetyltransferase 9, found in Oryza sativa subsp. japonica (Rice).